We begin with the raw amino-acid sequence, 178 residues long: Protein GrpE (178 aa).

Positions 1-11 are enriched in basic and acidic residues; that stretch reads MADELSEKSVE. The interval 1-32 is disordered; the sequence is MADELSEKSVEGTEEDGESAPAEGTTEGVPVD.

The protein belongs to the GrpE family. In terms of assembly, homodimer.

The protein localises to the cytoplasm. Its function is as follows. Participates actively in the response to hyperosmotic and heat shock by preventing the aggregation of stress-denatured proteins, in association with DnaK and GrpE. It is the nucleotide exchange factor for DnaK and may function as a thermosensor. Unfolded proteins bind initially to DnaJ; upon interaction with the DnaJ-bound protein, DnaK hydrolyzes its bound ATP, resulting in the formation of a stable complex. GrpE releases ADP from DnaK; ATP binding to DnaK triggers the release of the substrate protein, thus completing the reaction cycle. Several rounds of ATP-dependent interactions between DnaJ, DnaK and GrpE are required for fully efficient folding. The sequence is that of Protein GrpE from Methanothrix thermoacetophila (strain DSM 6194 / JCM 14653 / NBRC 101360 / PT) (Methanosaeta thermophila).